Reading from the N-terminus, the 341-residue chain is Phenylalanine--tRNA ligase alpha subunit (341 aa).

A Mg(2+)-binding site is contributed by Glu256.

This sequence belongs to the class-II aminoacyl-tRNA synthetase family. Phe-tRNA synthetase alpha subunit type 1 subfamily. Tetramer of two alpha and two beta subunits. The cofactor is Mg(2+).

The protein resides in the cytoplasm. It catalyses the reaction tRNA(Phe) + L-phenylalanine + ATP = L-phenylalanyl-tRNA(Phe) + AMP + diphosphate + H(+). The sequence is that of Phenylalanine--tRNA ligase alpha subunit (pheS) from Chlamydia muridarum (strain MoPn / Nigg).